A 624-amino-acid chain; its full sequence is Translocator protein BipB (624 aa).

Positions 54–99 are disordered; sequence LASEQCDAQPVTDDARLDRLDDKPALRAPRSDAAHAADGNARGNGG. Residues 66-88 show a composition bias toward basic and acidic residues; it reads DDARLDRLDDKPALRAPRSDAAH. Residues 313 to 343 adopt a coiled-coil conformation; the sequence is EMQAKREAELQKKSDEYQEQVKKAEEMQKTM. Helical transmembrane passes span 359–379, 405–425, and 434–454; these read FAAA…GLAL, AILK…LVAC, and LAGA…AAFV.

The protein belongs to the SctE/SipB/YopB family.

The protein localises to the secreted. The protein resides in the host membrane. Its function is as follows. Plays a role in the bacterium-induced formation of multinucleated giant cell (MNGC), which is formed after host cell fusion, as well as in the intercellular spreading of bacteria and in the induction of apoptosis in macrophages. May act in concert with other effector proteins to induce fusion of host cell membranes. The protein is Translocator protein BipB (bipB) of Burkholderia thailandensis (strain ATCC 700388 / DSM 13276 / CCUG 48851 / CIP 106301 / E264).